A 438-amino-acid polypeptide reads, in one-letter code: DEAD-box ATP-dependent RNA helicase 58, chloroplastic (438 aa).

Residues 1-44 (MAAFSGCASPLSTTLRSGLAPFTLRHRLRLRRLRASAATLREVC) constitute a chloroplast transit peptide. Residues 41–69 (REVCAGRVPEHVLQRAEEVGYVVPTEVQE) carry the Q motif motif. Residues 72 to 245 (LPVLLSGQDC…DCVQHKWTKT (174 aa)) form the Helicase ATP-binding domain. ATP is bound at residue 85-92 (AQTGSGKT). The DEAD box motif lies at 190–193 (DEVD). The Helicase C-terminal domain maps to 274-436 (RLHVLLSLLE…ELPVESMFAF (163 aa)).

Belongs to the DEAD box helicase family.

The protein localises to the plastid. It is found in the chloroplast. It catalyses the reaction ATP + H2O = ADP + phosphate + H(+). This Oryza sativa subsp. japonica (Rice) protein is DEAD-box ATP-dependent RNA helicase 58, chloroplastic.